Consider the following 478-residue polypeptide: Odorant receptor coreceptor (478 aa).

The Cytoplasmic segment spans residues 1-43 (MMKMKQQGLVADLLPNIRVMKTFGHFVFNYYNDNSSKYLHKVY). Residues 44-64 (CCVNLFMLLLQFGLCAVNLIV) form a helical membrane-spanning segment. Residues 65–73 (ESADVDDLT) are Extracellular-facing. The helical transmembrane segment at 74 to 94 (ANTITLLFFTHSIVKICYFAI) threads the bilayer. The Cytoplasmic portion of the chain corresponds to 95 to 133 (RSKYFYRTWAIWNNPNSHPLFAESNARYHAIALKKMRLL). Residues 134-154 (LFLVGGTTMLAAVAWTVLTFF) form a helical membrane-spanning segment. Topologically, residues 155-190 (EHPIRKIVDPVTNETEIIELPQLLIRSFYPFDAGKG) are extracellular. Residue Asn167 is glycosylated (N-linked (GlcNAc...) asparagine). A helical membrane pass occupies residues 191–211 (ITHVLVLVYQFYWVLFMLIDA). At 212–349 (NSLDVLFCSW…IVRLVTAVGD (138 aa)) the chain is on the cytoplasmic side. A disordered region spans residues 261-281 (SADHLRDGDNPPPPPPPQSDN). A helical membrane pass occupies residues 350–370 (AYGFALLLHMLTTTITLTLLA). The Extracellular segment spans residues 371–382 (YQATKVNGINVY). A helical transmembrane segment spans residues 383 to 403 (AASTIGYILYTFGQVFLFCIF). The Cytoplasmic portion of the chain corresponds to 404-454 (GNRLIEESTSVMEAAYSCHWYDGSEEAKTFVQIVCQQCQKAMSISGAKFFT). The chain crosses the membrane as a helical span at residues 455–475 (VSLDLFASVLGAVVTYFMVLV). Residues 476–478 (QLK) are Extracellular-facing.

This sequence belongs to the insect chemoreceptor superfamily. Heteromeric odorant receptor channel (TC 1.A.69) family. Orco subfamily. Heterodimer with conventional odorant receptors (ORs). As to expression, present in antennae (at protein level).

The protein resides in the cell membrane. In terms of biological role, odorant coreceptor which complexes with conventional odorant receptors (ORs) to form odorant-sensing units, providing sensitive and prolonged odorant signaling and calcium permeability. Obligate coreceptor of all odorant receptors. Orco is a universal and integral part of the functional odorant receptor, involved in the dendritic localization of other olfactory receptors. Can form functional ion channels in the absence of an odor-binding odorant receptor. Plays a central role in the perception of olfactory stimuli in ants and is essential for ant social organization. Required for pheromone sensing. Also required for the development and maintenance of odorant receptor neurons (ORNs) and of antennal lobe glomeruli. This chain is Odorant receptor coreceptor, found in Ooceraea biroi (Clonal raider ant).